A 296-amino-acid chain; its full sequence is NAD kinase (296 aa).

Asp-72 serves as the catalytic Proton acceptor. NAD(+) contacts are provided by residues 72–73, 146–147, Arg-157, Arg-174, Asp-176, 187–192, and Gln-247; these read DG, ND, and TAYALS.

This sequence belongs to the NAD kinase family. The cofactor is a divalent metal cation.

Its subcellular location is the cytoplasm. The catalysed reaction is NAD(+) + ATP = ADP + NADP(+) + H(+). In terms of biological role, involved in the regulation of the intracellular balance of NAD and NADP, and is a key enzyme in the biosynthesis of NADP. Catalyzes specifically the phosphorylation on 2'-hydroxyl of the adenosine moiety of NAD to yield NADP. In Hahella chejuensis (strain KCTC 2396), this protein is NAD kinase.